The following is a 112-amino-acid chain: Putative pterin-4-alpha-carbinolamine dehydratase (112 aa).

The protein belongs to the pterin-4-alpha-carbinolamine dehydratase family.

It carries out the reaction (4aS,6R)-4a-hydroxy-L-erythro-5,6,7,8-tetrahydrobiopterin = (6R)-L-erythro-6,7-dihydrobiopterin + H2O. The protein is Putative pterin-4-alpha-carbinolamine dehydratase of Syntrophotalea carbinolica (strain DSM 2380 / NBRC 103641 / GraBd1) (Pelobacter carbinolicus).